Here is a 24-residue protein sequence, read N- to C-terminus: Alpha-lactalbumin (24 aa).

Belongs to the glycosyl hydrolase 22 family. In terms of assembly, lactose synthase (LS) is a heterodimer of a catalytic component, beta1,4-galactosyltransferase (beta4Gal-T1) and a regulatory component, alpha-lactalbumin (LA). In terms of processing, glycosylated (50% of the proteins). Mammary gland specific. Secreted in milk.

The protein resides in the secreted. Regulatory subunit of lactose synthase, changes the substrate specificity of galactosyltransferase in the mammary gland making glucose a good acceptor substrate for this enzyme. This enables LS to synthesize lactose, the major carbohydrate component of milk. In other tissues, galactosyltransferase transfers galactose onto the N-acetylglucosamine of the oligosaccharide chains in glycoproteins. This chain is Alpha-lactalbumin (LALBA), found in Felis catus (Cat).